Here is a 119-residue protein sequence, read N- to C-terminus: Large ribosomal subunit protein uL18 (119 aa).

It belongs to the universal ribosomal protein uL18 family. In terms of assembly, part of the 50S ribosomal subunit; part of the 5S rRNA/L5/L18/L25 subcomplex. Contacts the 5S and 23S rRNAs.

This is one of the proteins that bind and probably mediate the attachment of the 5S RNA into the large ribosomal subunit, where it forms part of the central protuberance. The protein is Large ribosomal subunit protein uL18 of Oceanobacillus iheyensis (strain DSM 14371 / CIP 107618 / JCM 11309 / KCTC 3954 / HTE831).